Consider the following 136-residue polypeptide: NADH-ubiquinone oxidoreductase chain 3 (136 aa).

Transmembrane regions (helical) follow at residues 5–25 (TFFL…NLIF), 55–75 (ISFF…LLVY), and 85–105 (GIYG…GFAF).

This sequence belongs to the complex I subunit 3 family.

Its subcellular location is the mitochondrion membrane. The catalysed reaction is a ubiquinone + NADH + 5 H(+)(in) = a ubiquinol + NAD(+) + 4 H(+)(out). In terms of biological role, core subunit of the mitochondrial membrane respiratory chain NADH dehydrogenase (Complex I) that is believed to belong to the minimal assembly required for catalysis. Complex I functions in the transfer of electrons from NADH to the respiratory chain. The immediate electron acceptor for the enzyme is believed to be ubiquinone. The chain is NADH-ubiquinone oxidoreductase chain 3 (nd3) from Emericella nidulans (Aspergillus nidulans).